Consider the following 463-residue polypeptide: Soluble pyridine nucleotide transhydrogenase (463 aa).

35 to 44 lines the FAD pocket; sequence EDKPTVGGNC.

Belongs to the class-I pyridine nucleotide-disulfide oxidoreductase family. It depends on FAD as a cofactor.

Its subcellular location is the cytoplasm. It carries out the reaction NAD(+) + NADPH = NADH + NADP(+). Its function is as follows. Conversion of NADPH, generated by peripheral catabolic pathways, to NADH, which can enter the respiratory chain for energy generation. The sequence is that of Soluble pyridine nucleotide transhydrogenase from Marinobacter nauticus (strain ATCC 700491 / DSM 11845 / VT8) (Marinobacter aquaeolei).